Reading from the N-terminus, the 382-residue chain is Na(+)/H(+) antiporter NhaA (382 aa).

11 consecutive transmembrane segments (helical) span residues 13–33, 58–78, 94–114, 124–144, 153–173, 179–199, 204–224, 256–276, 285–305, 325–345, and 357–377; these read IGGILLFIAAVIAIIIANSPF, LLLWINDGLMAIYFLLIGLEI, LVPALTALAGLIFPALIFIFF, GWAIPTATDIAFTLGIVSLLG, ILLTAIAIFDDIAAIVIIALF, SLLSLSLALVFTLILIGLNYF, ISVFMLFGVALWIAVLKSGVH, VVFLILPLFAFANAGVSFVGL, VVLGIGLGLFLGKQLGIFLSL, VYGIALICGVGFTMSLFIGSL, and MVKIGVVLGSFIAGLTGFLVL.

The protein belongs to the NhaA Na(+)/H(+) (TC 2.A.33) antiporter family.

Its subcellular location is the cell inner membrane. It carries out the reaction Na(+)(in) + 2 H(+)(out) = Na(+)(out) + 2 H(+)(in). In terms of biological role, na(+)/H(+) antiporter that extrudes sodium in exchange for external protons. This is Na(+)/H(+) antiporter NhaA from Legionella pneumophila (strain Paris).